The primary structure comprises 351 residues: AA9 family lytic polysaccharide monooxygenase A (351 aa).

An N-terminal signal peptide occupies residues 1-20; the sequence is MSNKAATLLAALSGAALVAA. His21 and His107 together coordinate Cu(2+). The cysteines at positions 76 and 196 are disulfide-linked. 2 residues coordinate O2: His182 and Gln191. Tyr193 lines the Cu(2+) pocket. The CBM1 domain occupies 315–351; it reads GVAPKWGQCGGNGWTGPTVCASGSTCTVLNPYYSQCI.

This sequence belongs to the polysaccharide monooxygenase AA9 family. Requires Cu(2+) as cofactor.

The protein resides in the secreted. It carries out the reaction [(1-&gt;4)-beta-D-glucosyl]n+m + reduced acceptor + O2 = 4-dehydro-beta-D-glucosyl-[(1-&gt;4)-beta-D-glucosyl]n-1 + [(1-&gt;4)-beta-D-glucosyl]m + acceptor + H2O.. In terms of biological role, lytic polysaccharide monooxygenase (LPMO) that depolymerizes crystalline and amorphous polysaccharides via the oxidation of scissile alpha- or beta-(1-4)-glycosidic bonds, yielding C1 and C4 oxidation products. Catalysis by LPMOs requires the reduction of the active-site copper from Cu(II) to Cu(I) by a reducing agent and H(2)O(2) or O(2) as a cosubstrate. This Podospora anserina (strain S / ATCC MYA-4624 / DSM 980 / FGSC 10383) (Pleurage anserina) protein is AA9 family lytic polysaccharide monooxygenase A.